The following is a 553-amino-acid chain: RNA exonuclease 1 (553 aa).

Phosphoserine is present on serine 24. A coiled-coil region spans residues 167-194 (MEKINKLKELQKKKKITINDLVLSEQQL). Residues 225–373 (IFALDCEMCL…EDARACLELT (149 aa)) form the Exonuclease domain. Residues 509 to 533 (WNNLSTELEFIQDKKERLDKRRERE) adopt a coiled-coil conformation.

The protein belongs to the REXO1/REXO3 family.

The protein resides in the nucleus. Functionally, 3' exoribonuclease required for 5S rRNA maturation and for the proper maturation of the 5' cistron of the tRNA-Arg3 dicistronic gene. Involved with REX2 in the maturation of the 5.8S rRNA, and with REX2 and REX3, in the 3' processing of the U5L snRNA. The sequence is that of RNA exonuclease 1 (RNH70) from Saccharomyces cerevisiae (strain ATCC 204508 / S288c) (Baker's yeast).